A 232-amino-acid chain; its full sequence is Vesicle transport through interaction with t-SNAREs homolog 1B (232 aa).

N-acetylalanine is present on Ala2. Interaction with CLINT1 regions lie at residues 2 to 23 (AASAASSEHFEKLHEIFRGLLE) and 69 to 73 (APLTF). At 2–208 (AASAASSEHF…SRKVITNKLL (207 aa)) the chain is on the cytoplasmic side. The stretch at 36–98 (AGTEEKKKLV…AKLHREVRST (63 aa)) forms a coiled coil. Arg107 is modified (omega-N-methylarginine). A Phosphoserine modification is found at Ser138. Residues 160–201 (GTEIIEELGEQRDQLERTKSRLVNTNENLSKSRKILRSMSRK) adopt a coiled-coil conformation. A helical; Anchor for type IV membrane protein membrane pass occupies residues 209 to 229 (LSVIILLELAILVGLVYYKFF). Residues 230–232 (RHH) lie on the Vesicular side of the membrane.

It belongs to the VTI1 family. As to quaternary structure, forms a SNARE complex with STX7, STX8 and VAMP8 which functions in the homotypic fusion of late endosomes. Component of the SNARE complex composed of STX7, STX8, VAMP7 and VIT1B that is required for heterotypic fusion of late endosomes with lysosomes. May interact with STX17. Interacts with CLINT1. As to expression, broadly expressed.

The protein localises to the early endosome membrane. Its subcellular location is the late endosome membrane. The protein resides in the lysosome membrane. It is found in the cytoplasmic granule. It localises to the recycling endosome membrane. V-SNARE that mediates vesicle transport pathways through interactions with t-SNAREs on the target membrane. These interactions are proposed to mediate aspects of the specificity of vesicle trafficking and to promote fusion of the lipid bilayers. In Mus musculus (Mouse), this protein is Vesicle transport through interaction with t-SNAREs homolog 1B (Vti1b).